Consider the following 98-residue polypeptide: NADH-ubiquinone oxidoreductase chain 4L (98 aa).

Helical transmembrane passes span 1-21 (MSPI…GMLV), 26-46 (LMAS…MIAL), and 61-81 (IILL…LVSI).

It belongs to the complex I subunit 4L family. As to quaternary structure, core subunit of respiratory chain NADH dehydrogenase (Complex I) which is composed of 45 different subunits.

It is found in the mitochondrion inner membrane. The enzyme catalyses a ubiquinone + NADH + 5 H(+)(in) = a ubiquinol + NAD(+) + 4 H(+)(out). Functionally, core subunit of the mitochondrial membrane respiratory chain NADH dehydrogenase (Complex I) which catalyzes electron transfer from NADH through the respiratory chain, using ubiquinone as an electron acceptor. Part of the enzyme membrane arm which is embedded in the lipid bilayer and involved in proton translocation. The protein is NADH-ubiquinone oxidoreductase chain 4L (MT-ND4L) of Chlorocebus sabaeus (Green monkey).